The sequence spans 73 residues: Myosin-IB light chain (73 aa).

2 EF-hand domains span residues 3-38 (DEKT…GLPM) and 38-73 (MTEA…VDES). Aspartate 16, aspartate 18, aspartate 20, and glutamate 27 together coordinate Ca(2+).

In terms of assembly, myosin I is a dimer of a heavy and a light chain. Inability to self-assemble into filaments. Interacts with myoB. Does not interact with myoC or myoD.

Its function is as follows. Functions as the light chain for myosin-B. Binds calcium with submicromolar affinity and may sense physiological calcium changes. The polypeptide is Myosin-IB light chain (mlcB) (Dictyostelium discoideum (Social amoeba)).